The primary structure comprises 147 residues: UPF0179 protein NP_3406A (147 aa).

The protein belongs to the UPF0179 family.

This Natronomonas pharaonis (strain ATCC 35678 / DSM 2160 / CIP 103997 / JCM 8858 / NBRC 14720 / NCIMB 2260 / Gabara) (Halobacterium pharaonis) protein is UPF0179 protein NP_3406A.